We begin with the raw amino-acid sequence, 866 residues long: Oxidation resistance protein 1 (866 aa).

Residues methionine 1–glutamine 92 form a disordered region. The span at arginine 63 to arginine 88 shows a compositional bias: basic and acidic residues. The residue at position 90 (serine 90) is a Phosphoserine. Positions isoleucine 98 to valine 141 constitute a LysM domain. Position 118 is a phosphothreonine (threonine 118). The span at valine 150–glutamate 168 shows a compositional bias: low complexity. A disordered region spans residues valine 150–serine 202. Residues glutamate 170–glutamate 184 are compositionally biased toward basic and acidic residues. Phosphoserine is present on residues serine 201, serine 202, and serine 204. The 56-residue stretch at lysine 213–valine 268 folds into the GRAM domain. The tract at residues leucine 293 to lysine 540 is disordered. A phosphoserine mark is found at serine 294, serine 334, and serine 336. Phosphothreonine is present on threonine 341. Position 346 is a phosphoserine (serine 346). The span at proline 347 to serine 363 shows a compositional bias: basic and acidic residues. A compositionally biased stretch (polar residues) spans aspartate 364–glycine 399. A compositionally biased stretch (basic and acidic residues) spans glutamine 433–histidine 447. A compositionally biased stretch (polar residues) spans glutamine 448–glutamate 465. Basic and acidic residues predominate over residues glutamate 483–lysine 497. Serine 488 is modified (phosphoserine). Over residues histidine 502 to glutamine 519 the composition is skewed to polar residues. The interval arginine 543–threonine 570 is mediates oxidative antimutator activity. The interval lysine 682–proline 703 is disordered. Residues glutamate 705 to glutamate 866 form the TLDc domain.

Belongs to the OXR1 family. In terms of tissue distribution, highly expressed in brain and testis.

Its subcellular location is the mitochondrion. It localises to the nucleus. It is found in the nucleolus. May be involved in protection from oxidative damage. This chain is Oxidation resistance protein 1 (Oxr1), found in Mus musculus (Mouse).